The primary structure comprises 103 residues: Large ribosomal subunit protein bL21 (103 aa).

This sequence belongs to the bacterial ribosomal protein bL21 family. As to quaternary structure, part of the 50S ribosomal subunit. Contacts protein L20.

Functionally, this protein binds to 23S rRNA in the presence of protein L20. This chain is Large ribosomal subunit protein bL21, found in Hahella chejuensis (strain KCTC 2396).